A 391-amino-acid chain; its full sequence is Zinc finger protein ubi-d4 (391 aa).

Alanine 2 is subject to N-acetylalanine. Glycyl lysine isopeptide (Lys-Gly) (interchain with G-Cter in SUMO2) cross-links involve residues lysine 10, lysine 99, lysine 107, and lysine 108. 2 disordered regions span residues 79 to 147 (WRKK…GEFP) and 165 to 199 (DDLDDEDYEEDTPKRRGKGKSKSKGVSSARKKLDA). Composition is skewed to basic and acidic residues over residues 100-110 (PDTDQTLKKEG) and 126-140 (DPLEKRGAPDPRVDD). A Phosphoserine modification is found at serine 142. Residues 165–174 (DDLDDEDYEE) are compositionally biased toward acidic residues. Residue tyrosine 172 is modified to Phosphotyrosine. At threonine 176 the chain carries Phosphothreonine. Glycyl lysine isopeptide (Lys-Gly) (interchain with G-Cter in SUMO2) cross-links involve residues lysine 178 and lysine 196. Serine 200 carries the phosphoserine modification. Residues 209–232 (YACDICGKRYKNRPGLSYHYAHSH) form a C2H2-type zinc finger. A disordered region spans residues 233–266 (LAEEEGEDKEDSRPPTPVSQRSEEQKSKKGPDGL). Serine 244 is subject to Phosphoserine. The span at 253–263 (RSEEQKSKKGP) shows a compositional bias: basic and acidic residues. 2 consecutive PHD-type zinc fingers follow at residues 270-330 (NNYC…CKCC) and 327-377 (CKCC…CLDL). Serine 280 carries the post-translational modification Phosphoserine. Residue lysine 281 forms a Glycyl lysine isopeptide (Lys-Gly) (interchain with G-Cter in SUMO2) linkage.

It belongs to the requiem/DPF family. Interacts with the nucleosomes, in particular nucleosomes bearing histone H3 crotonylated at 'Lys-14' (H3K14cr) for which DPF2 has high affinity. Also interacts (via PHD-type zinc finger domains) with histone H3 butyrylated at 'Lys-14' (H3K14bu), histone H3 propionylated at 'Lys-14' (H3K14pr), and histone H3 acetylated at 'Lys-14' (H3K14ac). Interacts with histone H3 acetylated at 'Lys-9' (H3K9ac), histone H3 di-methylated at 'Lys-9' (H3K9me2), and histone H3 tri-methylated at 'Lys-9' (H3K9me3). Interacts with histone H4 acetylated at 'Lys-12' (H4K12ac). Interacts with histone H4 acetylated at 'Lys-16' (H4K16ac). Interacts with SWI/SNF complex components. Interacts with SMARCA2, SMARCA4, SMARCB1 and SMARCD1. Interacts with SMARCC1, SMARCC2 and ACTL6A. Interacts with RUNX1. As to expression, in embryo, highest levels are seen in brain, eyes, thymus and olfactory epithelium in nose, whereas several other tissues, including the musculoskeletal system, show moderate expression. In adult, higher expression in testis, medium in thymus and spleen, lower in certain parts of the brain as the hippocampus. No expression in adult heart, lung, liver, duodenum and kidney.

It localises to the nucleus. It is found in the cytoplasm. Functionally, plays an active role in transcriptional regulation by binding modified histones H3 and H4. Is a negative regulator of myeloid differentiation of hematopoietic progenitor cells. Might also have a role in the development and maturation of lymphoid cells. Involved in the regulation of non-canonical NF-kappa-B pathway. The protein is Zinc finger protein ubi-d4 (Dpf2) of Mus musculus (Mouse).